The primary structure comprises 503 residues: Ribose import ATP-binding protein RbsA 1 (503 aa).

ABC transporter domains are found at residues 5 to 241 and 253 to 495; these read IALE…VGRA and IGQP…AGIE. 37-44 lines the ATP pocket; the sequence is GENGAGKS.

Belongs to the ABC transporter superfamily. Ribose importer (TC 3.A.1.2.1) family. As to quaternary structure, the complex is composed of an ATP-binding protein (RbsA), two transmembrane proteins (RbsC) and a solute-binding protein (RbsB).

The protein localises to the cell inner membrane. It catalyses the reaction D-ribose(out) + ATP + H2O = D-ribose(in) + ADP + phosphate + H(+). In terms of biological role, part of the ABC transporter complex RbsABC involved in ribose import. Responsible for energy coupling to the transport system. This Rhizobium meliloti (strain 1021) (Ensifer meliloti) protein is Ribose import ATP-binding protein RbsA 1.